Here is a 218-residue protein sequence, read N- to C-terminus: Ras-related protein Rab-11B (218 aa).

Position 2 is an N-acetylglycine (Gly-2). GTP-binding residues include Ser-20, Gly-21, Gly-23, Lys-24, Ser-25, Asn-26, Asn-37, Leu-38, Ser-40, Ser-42, and Thr-43. Ser-25 provides a ligand contact to Mg(2+). Positions 36–47 (FNLESKSTIGVE) match the Switch 1 motif. Positions 43 and 66 each coordinate Mg(2+). The short motif at 67–86 (TAGQERYRAITSAYYRGAVG) is the Switch 2 element. 6 residues coordinate GTP: Gly-69, Asn-124, Lys-125, Asp-127, Ala-155, and Leu-156. Positions 183 to 218 (DRSAHDESPGNNVVDISVPPTTDGQKSNKLQCCQNM) are disordered. A compositionally biased stretch (polar residues) spans 201 to 218 (PPTTDGQKSNKLQCCQNM). S-geranylgeranyl cysteine attachment occurs at residues Cys-214 and Cys-215. Position 215 is a cysteine methyl ester (Cys-215). Residues 216–218 (QNM) constitute a propeptide, removed in mature form.

Belongs to the small GTPase superfamily. Rab family. Mg(2+) is required as a cofactor.

Its subcellular location is the recycling endosome membrane. It is found in the cytoplasmic vesicle. It localises to the secretory vesicle. The protein resides in the synaptic vesicle membrane. The protein localises to the phagosome membrane. It carries out the reaction GTP + H2O = GDP + phosphate + H(+). Its activity is regulated as follows. Regulated by guanine nucleotide exchange factors (GEFs) which promote the exchange of bound GDP for free GTP. Regulated by GTPase activating proteins (GAPs) which increase the GTP hydrolysis activity. Inhibited by GDP dissociation inhibitors (GDIs) which prevent Rab-GDP dissociation. Functionally, the small GTPases Rab are key regulators of intracellular membrane trafficking, from the formation of transport vesicles to their fusion with membranes. Rabs cycle between an inactive GDP-bound form and an active GTP-bound form that is able to recruit to membranes different set of downstream effectors directly responsible for vesicle formation, movement, tethering and fusion. That Rab plays a role in endocytic recycling, regulating apical recycling of several transmembrane proteins including cystic fibrosis transmembrane conductance regulator/CFTR, epithelial sodium channel/ENaC, potassium voltage-gated channel, and voltage-dependent L-type calcium channel. May also regulate constitutive and regulated secretion, like insulin granule exocytosis. Required for melanosome transport and release from melanocytes. Also regulates V-ATPase intracellular transport in response to extracellular acidosis. The protein is Ras-related protein Rab-11B of Diplobatis ommata (Ocellated electric ray).